Consider the following 377-residue polypeptide: MDGTEIAVSPRSLHSELMCPICLDMLKNTMTTKECLHRFCSDCIVTALRSGNKECPTCRKKLVSKRSLRPDPNFDALISKIYPSREEYEAHQDRVLIRLSRLHNQQALSSSIEEGLRMQAMHRAQRVRRPIPGSDQTTTMSGGEGDPGEGEGDGEDVSSDSAPDSAPGPAPKRPRGGGAGGSSVGTGGGGTGGVGGGAGSEDSGDRGGTLGGGTLGPPSPPGAPSPPEPGGEIELVFRPHPLLVEKGEYCQTRYVKTTGNATVDHLSKYLALRIALERRQQQEAGEPGGPGGGASDTGGPDGGGGEGGGAGGGDGPEEPALPSLEGVSEKQYTIYIAPGGGAFTTLNGSLTLELVNEKFWKVSRPLELCYAPTKDPK.

Positions 1 to 205 (MDGTEIAVSP…GGAGSEDSGD (205 aa)) are necessary for transcriptional repression. Position 9 is a phosphoserine (Ser-9). The RING-type zinc finger occupies 19-59 (CPICLDMLKNTMTTKECLHRFCSDCIVTALRSGNKECPTCR). Residues Ser-111, Ser-158, and Ser-161 each carry the phosphoserine modification. 2 disordered regions span residues 119–234 (QAMH…GEIE) and 280–325 (QQQE…PSLE). Over residues 146-158 (DPGEGEGDGEDVS) the composition is skewed to acidic residues. The short motif at 172-175 (KRPR) is the Nuclear localization signal element. Over residues 176–199 (GGGAGGSSVGTGGGGTGGVGGGAG) the composition is skewed to gly residues. Phosphothreonine is present on residues Thr-186 and Thr-191. Phosphoserine occurs at positions 200 and 203. The interval 201 to 377 (EDSGDRGGTL…LCYAPTKDPK (177 aa)) is necessary for interaction with CBX2. Over residues 206–215 (RGGTLGGGTL) the composition is skewed to gly residues. A compositionally biased stretch (pro residues) spans 217 to 229 (PPSPPGAPSPPEP). Ser-219 and Ser-225 each carry phosphoserine. The span at 286–314 (EPGGPGGGASDTGGPDGGGGEGGGAGGGD) shows a compositional bias: gly residues.

Component of chromatin-associated Polycomb (PcG) complexes. Part of the E2F6.com-1 complex in G0 phase composed of E2F6, MGA, MAX, TFDP1, CBX3, BAT8, EUHMTASE1, RING1, RNF2/RING2 MBLR, L3MBTL2 and YAF2. Interacts with CBX2 and PCGF6. Component of a PRC1-like complex. Component of repressive BCOR complex containing Polycomb group subcomplex at least composed of RYBP, PCGF1, BCOR and RNF2/RING2. Interacts with BMI1, PHC2, PCGF2, RNF2; CBX6, CBX7 and CBX8. Interacts with MN1.

The protein localises to the nucleus speckle. It carries out the reaction S-ubiquitinyl-[E2 ubiquitin-conjugating enzyme]-L-cysteine + [acceptor protein]-L-lysine = [E2 ubiquitin-conjugating enzyme]-L-cysteine + N(6)-ubiquitinyl-[acceptor protein]-L-lysine.. The protein operates within protein modification; protein ubiquitination. Constitutes one of the E3 ubiquitin-protein ligases that mediate monoubiquitination of 'Lys-119' of histone H2A, thereby playing a central role in histone code and gene regulation. H2A 'Lys-119' ubiquitination gives a specific tag for epigenetic transcriptional repression and participates in X chromosome inactivation of female mammals. Essential component of a Polycomb group (PcG) multiprotein PRC1-like complex, a complex class required to maintain the transcriptionally repressive state of many genes, including Hox genes, throughout development. PcG PRC1 complex acts via chromatin remodeling and modification of histones, rendering chromatin heritably changed in its expressibility. Compared to RNF2/RING2, it does not have the main E3 ubiquitin ligase activity on histone H2A, and it may rather act as a modulator of RNF2/RING2 activity. The protein is E3 ubiquitin-protein ligase RING1 (RING1) of Gorilla gorilla gorilla (Western lowland gorilla).